Here is a 106-residue protein sequence, read N- to C-terminus: 1-deoxy-D-xylulose 5-phosphate reductoisomerase (106 aa).

D3 serves as a coordination point for Mn(2+). The 1-deoxy-D-xylulose 5-phosphate site is built by S4, E5, S29, H52, S65, N70, K71, and E74. E5 provides a ligand contact to Mn(2+). Position 74 (E74) interacts with Mn(2+).

This sequence belongs to the DXR family. It depends on Mn(2+) as a cofactor. The cofactor is Mg(2+).

It localises to the plastid. The protein localises to the chloroplast stroma. The catalysed reaction is 2-C-methyl-D-erythritol 4-phosphate + NADP(+) = 1-deoxy-D-xylulose 5-phosphate + NADPH + H(+). It participates in isoprenoid biosynthesis; isopentenyl diphosphate biosynthesis via DXP pathway; isopentenyl diphosphate from 1-deoxy-D-xylulose 5-phosphate: step 1/6. Functionally, enzyme of the plastid non-mevalonate pathway for isoprenoid biosynthesis that catalyzes the NADPH-dependent rearrangement and reduction of 1-deoxy-D-xylulose-5-phosphate (DXP) to 2-C-methyl-D-erythritol 4-phosphate (MEP). Required for chloroplast development. The polypeptide is 1-deoxy-D-xylulose 5-phosphate reductoisomerase (Origanum vulgare (Wild marjoram)).